Consider the following 80-residue polypeptide: Inner kinetochore subunit MHF2 (80 aa).

It belongs to the CENP-X/MHF2 family. The MHF histone-fold complex is a heterotetramer of 2 MHF1-MHF2 heterodimers. Together with MPH1/FANCM, forms the FANCM-MHF complex. Component of the inner kinetochore constitutive centromere-associated network (CCAN) (also known as central kinetochore CTF19 complex in yeast), which is composed of at least AME1, CHL4, CNN1, CTF3, CTF19, IML3, MCM16, MCM21, MCM22, MHF1, MHF2, MIF2, NKP1, NKP2, OKP1 and WIP1.

Functionally, DNA-binding component of a FANCM-MHF complex involved in DNA damage repair and genome maintenance. FANCM-MHF promotes gene conversion at blocked replication forks, probably by reversal of the stalled fork. Component of the kinetochore, a multiprotein complex that assembles on centromeric DNA and attaches chromosomes to spindle microtubules, mediating chromosome segregation and sister chromatid segregation during meiosis and mitosis. Component of the inner kinetochore constitutive centromere-associated network (CCAN), which serves as a structural platform for outer kinetochore assembly. The sequence is that of Inner kinetochore subunit MHF2 from Saccharomyces cerevisiae (strain ATCC 204508 / S288c) (Baker's yeast).